A 316-amino-acid chain; its full sequence is Probable cell division protein WhiA (316 aa).

Positions 275–309 (TLKELGEMVASGKISKSGINHRLRKLDEIAEQLRT) form a DNA-binding region, H-T-H motif.

The protein belongs to the WhiA family.

Functionally, involved in cell division and chromosome segregation. This Bacillus velezensis (strain DSM 23117 / BGSC 10A6 / LMG 26770 / FZB42) (Bacillus amyloliquefaciens subsp. plantarum) protein is Probable cell division protein WhiA.